The primary structure comprises 479 residues: MRVLSVGSEIYPLVKTGGLADVMGALPAALSSEGITVRSLVPGYPAVTAALDRAESVLRIPDLFGGAAEIRAAAAGRHDLFVLDAPHLYARPGNPYIASNGVDWSDNAQRFAALCRAGALLARGAVGGFVPDLLHAHDWQAGLVPAYLHYEGHAAPPCVFTVHNLAFQGWFPAHLLGALGLPASAFVIDGVEYFGGIGFLKAGLQFADAITTVSPRYATEIATQDGGMGLDGLLRKRGSAVHGILNGLDTATWNPATDEHLAARYDVANLAARAVNKRAVQARMGLAPDPRALLFGVVSRLAGQKGIDLIIEALPVLDALGAQLAVLGTGETGIEASLREAVAARPGRVAAIIGFEESLSHLIQGGADAILVPSRFEPCGLTQLAAQRYGAIPVVSLVGGLVDTVIDANPVAISAGVATGIQFGPVSEAGLSDGLRRTAALYADPDKWSRMQRNAMALDVSWTEPARNYAALYRSLTSR.

Lysine 15 is a binding site for ADP-alpha-D-glucose.

Belongs to the glycosyltransferase 1 family. Bacterial/plant glycogen synthase subfamily.

The catalysed reaction is [(1-&gt;4)-alpha-D-glucosyl](n) + ADP-alpha-D-glucose = [(1-&gt;4)-alpha-D-glucosyl](n+1) + ADP + H(+). It functions in the pathway glycan biosynthesis; glycogen biosynthesis. Functionally, synthesizes alpha-1,4-glucan chains using ADP-glucose. This is Glycogen synthase from Acidiphilium cryptum (strain JF-5).